The primary structure comprises 340 residues: Methionine import ATP-binding protein MetN 2 (340 aa).

The ABC transporter domain maps to 2 to 241; it reads ITLQNVVKEY…PQEKVTQRFV (240 aa). An ATP-binding site is contributed by 38-45; it reads GYSGAGKS.

It belongs to the ABC transporter superfamily. Methionine importer (TC 3.A.1.24) family. As to quaternary structure, the complex is composed of two ATP-binding proteins (MetN), two transmembrane proteins (MetI) and a solute-binding protein (MetQ).

It is found in the cell membrane. It carries out the reaction L-methionine(out) + ATP + H2O = L-methionine(in) + ADP + phosphate + H(+). It catalyses the reaction D-methionine(out) + ATP + H2O = D-methionine(in) + ADP + phosphate + H(+). Its function is as follows. Part of the ABC transporter complex MetNIQ involved in methionine import. Responsible for energy coupling to the transport system. In Listeria monocytogenes serovar 1/2a (strain ATCC BAA-679 / EGD-e), this protein is Methionine import ATP-binding protein MetN 2.